Reading from the N-terminus, the 833-residue chain is Leucine--tRNA ligase (833 aa).

A 'HIGH' region motif is present at residues 41-52 (PYPSGAGLHVGH). The short motif at 610–614 (KMSKS) is the 'KMSKS' region element. Residue K613 coordinates ATP.

It belongs to the class-I aminoacyl-tRNA synthetase family.

The protein localises to the cytoplasm. The enzyme catalyses tRNA(Leu) + L-leucine + ATP = L-leucyl-tRNA(Leu) + AMP + diphosphate. The chain is Leucine--tRNA ligase from Streptococcus pneumoniae (strain CGSP14).